An 84-amino-acid chain; its full sequence is U8-theraphotoxin-Hhn1g (84 aa).

An N-terminal signal peptide occupies residues 1-21; the sequence is MKVVLLVCLVWMMAMMELVSC. 5 disulfides stabilise this stretch: cysteine 23/cysteine 35, cysteine 29/cysteine 44, cysteine 34/cysteine 67, cysteine 54/cysteine 75, and cysteine 69/cysteine 81.

This sequence belongs to the AVIT (prokineticin) family. Expressed by the venom gland.

The protein resides in the secreted. The chain is U8-theraphotoxin-Hhn1g from Cyriopagopus hainanus (Chinese bird spider).